Here is a 934-residue protein sequence, read N- to C-terminus: Serine/threonine-protein kinase atg1 (934 aa).

The Protein kinase domain maps to 22 to 328 (YTRLDEIGRG…SDFFDCDTIT (307 aa)). ATP contacts are provided by residues 28 to 36 (IGRGSFATV) and Lys51. Catalysis depends on Asp165, which acts as the Proton acceptor. Disordered stretches follow at residues 335-432 (IADD…PRRP), 462-481 (RNTY…TKEE), 531-580 (RRPG…YGQS), 684-703 (TDPS…TDLT), 800-822 (RLPP…GSGA), and 878-900 (EEEE…RRDG). The span at 340-368 (PSTSRRSSVAVNTSGSTSRPQSRTGSRTP) shows a compositional bias: polar residues. The span at 371 to 386 (MKREKDASYPGKKDDQ) shows a compositional bias: basic and acidic residues. The segment covering 538–550 (SSTATATSPLATT) has biased composition (low complexity). Residues 561–577 (ARADSTHTRQGSYERRY) are compositionally biased toward basic and acidic residues.

It belongs to the protein kinase superfamily. Ser/Thr protein kinase family. APG1/unc-51/ULK1 subfamily. In terms of assembly, homodimer. Forms a ternary complex with ATG13 and ATG17.

Its subcellular location is the cytoplasm. The protein resides in the preautophagosomal structure membrane. The catalysed reaction is L-seryl-[protein] + ATP = O-phospho-L-seryl-[protein] + ADP + H(+). It catalyses the reaction L-threonyl-[protein] + ATP = O-phospho-L-threonyl-[protein] + ADP + H(+). In terms of biological role, serine/threonine protein kinase involved in the cytoplasm to vacuole transport (Cvt) and found to be essential in autophagy, where it is required for the formation of autophagosomes. Involved in the clearance of protein aggregates which cannot be efficiently cleared by the proteasome. Required for selective autophagic degradation of the nucleus (nucleophagy) as well as for mitophagy which contributes to regulate mitochondrial quantity and quality by eliminating the mitochondria to a basal level to fulfill cellular energy requirements and preventing excess ROS production. Also involved in endoplasmic reticulum-specific autophagic process, in selective removal of ER-associated degradation (ERAD) substrates. Plays a key role in ATG9 and ATG23 cycling through the pre-autophagosomal structure and is necessary to promote ATG18 binding to ATG9 through phosphorylation of ATG9. Catalyzes phosphorylation of ATG4, decreasing the interaction between ATG4 and ATG8 and impairing deconjugation of PE-conjugated forms of ATG8. Required for conidiation and development of aerial hyphae. In Aspergillus oryzae (strain ATCC 42149 / RIB 40) (Yellow koji mold), this protein is Serine/threonine-protein kinase atg1.